The sequence spans 870 residues: Leucine--tRNA ligase (870 aa).

The 'HIGH' region signature appears at 55–65 (PYPSGTLHMGH). Residues 626–630 (KMSKS) carry the 'KMSKS' region motif. Residue K629 coordinates ATP.

It belongs to the class-I aminoacyl-tRNA synthetase family.

Its subcellular location is the cytoplasm. It catalyses the reaction tRNA(Leu) + L-leucine + ATP = L-leucyl-tRNA(Leu) + AMP + diphosphate. In Prochlorococcus marinus (strain SARG / CCMP1375 / SS120), this protein is Leucine--tRNA ligase.